We begin with the raw amino-acid sequence, 117 residues long: Aspartate 1-decarboxylase (117 aa).

Residue S25 is the Schiff-base intermediate with substrate; via pyruvic acid of the active site. S25 carries the post-translational modification Pyruvic acid (Ser). T57 is a binding site for substrate. Y58 acts as the Proton donor in catalysis. Substrate is bound at residue 73-75 (GAA).

It belongs to the PanD family. As to quaternary structure, heterooctamer of four alpha and four beta subunits. Pyruvate serves as cofactor. In terms of processing, is synthesized initially as an inactive proenzyme, which is activated by self-cleavage at a specific serine bond to produce a beta-subunit with a hydroxyl group at its C-terminus and an alpha-subunit with a pyruvoyl group at its N-terminus.

Its subcellular location is the cytoplasm. The catalysed reaction is L-aspartate + H(+) = beta-alanine + CO2. The protein operates within cofactor biosynthesis; (R)-pantothenate biosynthesis; beta-alanine from L-aspartate: step 1/1. In terms of biological role, catalyzes the pyruvoyl-dependent decarboxylation of aspartate to produce beta-alanine. The protein is Aspartate 1-decarboxylase of Bacteroides thetaiotaomicron (strain ATCC 29148 / DSM 2079 / JCM 5827 / CCUG 10774 / NCTC 10582 / VPI-5482 / E50).